The following is a 125-amino-acid chain: Large ribosomal subunit protein bL12 (125 aa).

It belongs to the bacterial ribosomal protein bL12 family. Homodimer. Part of the ribosomal stalk of the 50S ribosomal subunit. Forms a multimeric L10(L12)X complex, where L10 forms an elongated spine to which 2 to 4 L12 dimers bind in a sequential fashion. Binds GTP-bound translation factors.

Its function is as follows. Forms part of the ribosomal stalk which helps the ribosome interact with GTP-bound translation factors. Is thus essential for accurate translation. The polypeptide is Large ribosomal subunit protein bL12 (Afipia carboxidovorans (strain ATCC 49405 / DSM 1227 / KCTC 32145 / OM5) (Oligotropha carboxidovorans)).